Here is a 212-residue protein sequence, read N- to C-terminus: ATP-dependent Clp protease proteolytic subunit (212 aa).

The active-site Nucleophile is the S112. The active site involves H137.

This sequence belongs to the peptidase S14 family. As to quaternary structure, fourteen ClpP subunits assemble into 2 heptameric rings which stack back to back to give a disk-like structure with a central cavity, resembling the structure of eukaryotic proteasomes.

Its subcellular location is the cytoplasm. The enzyme catalyses Hydrolysis of proteins to small peptides in the presence of ATP and magnesium. alpha-casein is the usual test substrate. In the absence of ATP, only oligopeptides shorter than five residues are hydrolyzed (such as succinyl-Leu-Tyr-|-NHMec, and Leu-Tyr-Leu-|-Tyr-Trp, in which cleavage of the -Tyr-|-Leu- and -Tyr-|-Trp bonds also occurs).. Functionally, cleaves peptides in various proteins in a process that requires ATP hydrolysis. Has a chymotrypsin-like activity. Plays a major role in the degradation of misfolded proteins. This Thiobacillus denitrificans (strain ATCC 25259 / T1) protein is ATP-dependent Clp protease proteolytic subunit.